A 383-amino-acid chain; its full sequence is tRNA(Met) cytidine acetate ligase (383 aa).

ATP contacts are provided by residues 7-20 (ISEY…HLYQ), Gly-102, Asn-160, and 181-182 (RI).

Belongs to the TmcAL family.

Its subcellular location is the cytoplasm. The catalysed reaction is cytidine(34) in elongator tRNA(Met) + acetate + ATP = N(4)-acetylcytidine(34) in elongator tRNA(Met) + AMP + diphosphate. In terms of biological role, catalyzes the formation of N(4)-acetylcytidine (ac(4)C) at the wobble position of elongator tRNA(Met), using acetate and ATP as substrates. First activates an acetate ion to form acetyladenylate (Ac-AMP) and then transfers the acetyl group to tRNA to form ac(4)C34. The polypeptide is tRNA(Met) cytidine acetate ligase (Exiguobacterium sibiricum (strain DSM 17290 / CCUG 55495 / CIP 109462 / JCM 13490 / 255-15)).